Reading from the N-terminus, the 354-residue chain is Homeobox protein Nkx-2.4 (354 aa).

Residues 188-247 (RRKRRVLFSQAQVYELERRFKQQKYLSAPEREHLASMIHLTPTQVKIWFQNHRYKMKRQA) constitute a DNA-binding region (homeobox). Residues 245–329 (RQAKDKAAQQ…PALHGPGGGL (85 aa)) are disordered. The segment covering 262–272 (GPPPPPPPPSP) has biased composition (pro residues). The segment covering 290 to 304 (GAGTPTPGQGGQQPQ) has biased composition (low complexity).

It belongs to the NK-2 homeobox family. In terms of tissue distribution, in the embryo it is detected in the posterior hypothalamus and later in the head. In the adult it is detected only in testis.

The protein localises to the nucleus. Functionally, probable transcription factor. The sequence is that of Homeobox protein Nkx-2.4 (Nkx2-4) from Mus musculus (Mouse).